We begin with the raw amino-acid sequence, 152 residues long: UPF0266 membrane protein YobD (152 aa).

3 helical membrane-spanning segments follow: residues 6-26 (LVLI…QFIM), 45-65 (VDSV…VTSH), and 67-87 (AQMT…IFWI).

It belongs to the UPF0266 family.

The protein localises to the cell inner membrane. The sequence is that of UPF0266 membrane protein YobD from Salmonella dublin (strain CT_02021853).